The sequence spans 246 residues: 1-(5-phosphoribosyl)-5-[(5-phosphoribosylamino)methylideneamino] imidazole-4-carboxamide isomerase (246 aa).

The Proton acceptor role is filled by D8. D129 functions as the Proton donor in the catalytic mechanism.

The protein belongs to the HisA/HisF family.

The protein localises to the cytoplasm. It carries out the reaction 1-(5-phospho-beta-D-ribosyl)-5-[(5-phospho-beta-D-ribosylamino)methylideneamino]imidazole-4-carboxamide = 5-[(5-phospho-1-deoxy-D-ribulos-1-ylimino)methylamino]-1-(5-phospho-beta-D-ribosyl)imidazole-4-carboxamide. It functions in the pathway amino-acid biosynthesis; L-histidine biosynthesis; L-histidine from 5-phospho-alpha-D-ribose 1-diphosphate: step 4/9. The sequence is that of 1-(5-phosphoribosyl)-5-[(5-phosphoribosylamino)methylideneamino] imidazole-4-carboxamide isomerase from Desulforamulus reducens (strain ATCC BAA-1160 / DSM 100696 / MI-1) (Desulfotomaculum reducens).